The primary structure comprises 71 residues: ATP synthase subunit c (71 aa).

Transmembrane regions (helical) follow at residues 5-25 (GAAIVAGLAAVGGAIAVAIIV) and 47-67 (FIGVPLAEAVPIIAIVMGFLI).

This sequence belongs to the ATPase C chain family. As to quaternary structure, F-type ATPases have 2 components, F(1) - the catalytic core - and F(0) - the membrane proton channel. F(1) has five subunits: alpha(3), beta(3), gamma(1), delta(1), epsilon(1). F(0) has three main subunits: a(1), b(2) and c(10-14). The alpha and beta chains form an alternating ring which encloses part of the gamma chain. F(1) is attached to F(0) by a central stalk formed by the gamma and epsilon chains, while a peripheral stalk is formed by the delta and b chains.

It is found in the cell membrane. Functionally, f(1)F(0) ATP synthase produces ATP from ADP in the presence of a proton or sodium gradient. F-type ATPases consist of two structural domains, F(1) containing the extramembraneous catalytic core and F(0) containing the membrane proton channel, linked together by a central stalk and a peripheral stalk. During catalysis, ATP synthesis in the catalytic domain of F(1) is coupled via a rotary mechanism of the central stalk subunits to proton translocation. Its function is as follows. Key component of the F(0) channel; it plays a direct role in translocation across the membrane. A homomeric c-ring of between 10-14 subunits forms the central stalk rotor element with the F(1) delta and epsilon subunits. This chain is ATP synthase subunit c, found in Alkalihalobacillus alcalophilus (Bacillus alcalophilus).